A 366-amino-acid chain; its full sequence is Phospho-N-acetylmuramoyl-pentapeptide-transferase (366 aa).

10 helical membrane-spanning segments follow: residues 27-47 (AALFTSALIVFLFGPTIINSL), 71-91 (TPTMGGLMILAGIVGASLLWA), 93-113 (LSNVYVVATLLVTLGFGAIGF), 134-154 (LGIEFVIAGIAVYFMMRTALA), 174-194 (FMINIGIMFVVFGGFVIVGAG), 205-225 (GLAIVPVMIAAASFGVIAYLA), 245-265 (LAVVLGAVIGAGLGFLWFNAP), 268-288 (AIFMGDTGSLALGGTIGTVAV), 294-314 (IVMAIIGGLFVMETLSVIIQV), and 343-363 (QVVIRFWIIAVGLAMLGLSTL).

Belongs to the glycosyltransferase 4 family. MraY subfamily. The cofactor is Mg(2+).

The protein localises to the cell inner membrane. The enzyme catalyses UDP-N-acetyl-alpha-D-muramoyl-L-alanyl-gamma-D-glutamyl-meso-2,6-diaminopimeloyl-D-alanyl-D-alanine + di-trans,octa-cis-undecaprenyl phosphate = di-trans,octa-cis-undecaprenyl diphospho-N-acetyl-alpha-D-muramoyl-L-alanyl-D-glutamyl-meso-2,6-diaminopimeloyl-D-alanyl-D-alanine + UMP. The protein operates within cell wall biogenesis; peptidoglycan biosynthesis. In terms of biological role, catalyzes the initial step of the lipid cycle reactions in the biosynthesis of the cell wall peptidoglycan: transfers peptidoglycan precursor phospho-MurNAc-pentapeptide from UDP-MurNAc-pentapeptide onto the lipid carrier undecaprenyl phosphate, yielding undecaprenyl-pyrophosphoryl-MurNAc-pentapeptide, known as lipid I. The chain is Phospho-N-acetylmuramoyl-pentapeptide-transferase from Rhizobium leguminosarum bv. trifolii (strain WSM2304).